Reading from the N-terminus, the 231-residue chain is Large ribosomal subunit protein uL1 (231 aa).

This sequence belongs to the universal ribosomal protein uL1 family. Part of the 50S ribosomal subunit.

Functionally, binds directly to 23S rRNA. The L1 stalk is quite mobile in the ribosome, and is involved in E site tRNA release. Protein L1 is also a translational repressor protein, it controls the translation of the L11 operon by binding to its mRNA. The protein is Large ribosomal subunit protein uL1 of Pseudomonas savastanoi pv. phaseolicola (strain 1448A / Race 6) (Pseudomonas syringae pv. phaseolicola (strain 1448A / Race 6)).